Reading from the N-terminus, the 128-residue chain is Holo-[acyl-carrier-protein] synthase (128 aa).

Mg(2+) contacts are provided by aspartate 8 and glutamate 59.

It belongs to the P-Pant transferase superfamily. AcpS family. Requires Mg(2+) as cofactor.

It is found in the cytoplasm. The enzyme catalyses apo-[ACP] + CoA = holo-[ACP] + adenosine 3',5'-bisphosphate + H(+). Functionally, transfers the 4'-phosphopantetheine moiety from coenzyme A to a Ser of acyl-carrier-protein. This chain is Holo-[acyl-carrier-protein] synthase, found in Rickettsia typhi (strain ATCC VR-144 / Wilmington).